Here is a 247-residue protein sequence, read N- to C-terminus: 2,3-bisphosphoglycerate-dependent phosphoglycerate mutase (247 aa).

Substrate-binding positions include 8 to 15, 21 to 22, R60, 87 to 90, K98, 114 to 115, and 183 to 184; these read RHGESVWN, TG, ERHY, RR, and GN. H9 functions as the Tele-phosphohistidine intermediate in the catalytic mechanism. E87 functions as the Proton donor/acceptor in the catalytic mechanism.

Belongs to the phosphoglycerate mutase family. BPG-dependent PGAM subfamily. In terms of assembly, homodimer.

The enzyme catalyses (2R)-2-phosphoglycerate = (2R)-3-phosphoglycerate. It participates in carbohydrate degradation; glycolysis; pyruvate from D-glyceraldehyde 3-phosphate: step 3/5. Catalyzes the interconversion of 2-phosphoglycerate and 3-phosphoglycerate. In Geobacter metallireducens (strain ATCC 53774 / DSM 7210 / GS-15), this protein is 2,3-bisphosphoglycerate-dependent phosphoglycerate mutase.